A 54-amino-acid polypeptide reads, in one-letter code: Large ribosomal subunit protein bL33 (54 aa).

It belongs to the bacterial ribosomal protein bL33 family.

The polypeptide is Large ribosomal subunit protein bL33 (Thermobifida fusca (strain YX)).